A 137-amino-acid chain; its full sequence is Peptide methionine sulfoxide reductase MsrB (137 aa).

In terms of domain architecture, MsrB spans 7-129; it reads PTENIEKLSD…NSASLNFVDD (123 aa). Residues cysteine 46, cysteine 49, cysteine 95, and cysteine 98 each coordinate Zn(2+). Catalysis depends on cysteine 118, which acts as the Nucleophile.

This sequence belongs to the MsrB Met sulfoxide reductase family. Zn(2+) serves as cofactor.

The catalysed reaction is L-methionyl-[protein] + [thioredoxin]-disulfide + H2O = L-methionyl-(R)-S-oxide-[protein] + [thioredoxin]-dithiol. The polypeptide is Peptide methionine sulfoxide reductase MsrB (Yersinia pseudotuberculosis serotype O:1b (strain IP 31758)).